Consider the following 777-residue polypeptide: Glucocorticoid receptor (777 aa).

Over residues 1-14 the composition is skewed to basic and acidic residues; sequence MDSKESLTPGKEEN. A disordered region spans residues 1-22; that stretch reads MDSKESLTPGKEENPSSVLTQE. The modulating stretch occupies residues 1-420; the sequence is MDSKESLTPG…TATTGPPPKL (420 aa). Residue Thr-8 is modified to Phosphothreonine. Arg-23 bears the Omega-N-methylarginine mark. A phosphoserine mark is found at Ser-45, Ser-113, Ser-134, and Ser-141. The tract at residues 130-183 is disordered; that stretch reads NRSTSVPENPKSSASSSVSAAPKEKEFPKTHSDVSSEQQNLKGQTGTNGGNAKL. Low complexity predominate over residues 134-150; that stretch reads SVPENPKSSASSSVSAA. A compositionally biased stretch (basic and acidic residues) spans 151 to 163; that stretch reads PKEKEFPKTHSDV. Residues 164–174 show a composition bias toward polar residues; the sequence is SSEQQNLKGQT. A phosphoserine mark is found at Ser-203, Ser-211, and Ser-226. A Glycyl lysine isopeptide (Lys-Gly) (interchain with G-Cter in SUMO2) cross-link involves residue Lys-258. Phosphoserine is present on Ser-267. Glycyl lysine isopeptide (Lys-Gly) (interchain with G-Cter in SUMO); alternate cross-links involve residues Lys-277 and Lys-293. Residues Lys-277 and Lys-293 each participate in a glycyl lysine isopeptide (Lys-Gly) (interchain with G-Cter in SUMO2); alternate cross-link. Positions 394 to 414 are enriched in low complexity; that stretch reads SSPSMRPDVSSPPSSSSTATT. Residues 394-415 form a disordered region; it reads SSPSMRPDVSSPPSSSSTATTG. At Ser-404 the chain carries Phosphoserine. Lys-419 participates in a covalent cross-link: Glycyl lysine isopeptide (Lys-Gly) (interchain with G-Cter in ubiquitin). 2 consecutive NR C4-type zinc fingers follow at residues 421–441 and 457–481; these read CLVC…CGSC and CAGR…YRKC. The nuclear receptor DNA-binding region spans 421–486; the sequence is CLVCSDEASG…RYRKCLQAGM (66 aa). N6-acetyllysine occurs at positions 480, 492, 494, and 495. Positions 485 to 777 are interaction with CLOCK; sequence GMNLEARKTK…NIRKLLFHQK (293 aa). Positions 487 to 523 are hinge; that stretch reads NLEARKTKKKIKGIQQATTGVSQETSENPANKTIVPA. The NR LBD domain occupies 524 to 758; sequence TLPQLTPTLV…FPEMLAEIIT (235 aa). Residues 532-697 are interaction with CRY1; it reads LVSLLEVIEP…EIRMTYIKEL (166 aa). Lys-703 is covalently cross-linked (Glycyl lysine isopeptide (Lys-Gly) (interchain with G-Cter in SUMO)).

Belongs to the nuclear hormone receptor family. NR3 subfamily. As to quaternary structure, heteromultimeric cytoplasmic complex with HSP90AA1, HSPA1A/HSPA1B, and FKBP5 or another immunophilin such as PPID, STIP1, or the immunophilin homolog PPP5C. Upon ligand binding FKBP5 dissociates from the complex and FKBP4 takes its place, thereby linking the complex to dynein and mediating transport to the nucleus, where the complex dissociates. Probably forms a complex composed of chaperones HSP90 and HSP70, co-chaperones CDC37, PPP5C, TSC1 and client protein TSC2, CDK4, AKT, RAF1 and NR3C1; this complex does not contain co-chaperones STIP1/HOP and PTGES3/p23. Directly interacts with UNC45A. Binds to DNA as a homodimer, and as heterodimer with NR3C2 or the retinoid X receptor. Binds STAT5A and STAT5B homodimers and heterodimers. Interacts with NRIP1, POU2F1, POU2F2 and TRIM28. Interacts with several coactivator complexes, including the SMARCA4 complex, CREBBP/EP300, TADA2L (Ada complex) and p160 coactivators such as NCOA2 and NCOA6. Interaction with BAG1 inhibits transactivation. Interacts with HEXIM1 and TGFB1I1. Interacts with NCOA1. Interacts with NCOA3, SMARCA4, SMARCC1, SMARCD1, and SMARCE1. Interacts with CLOCK, CRY1 and CRY2 in a ligand-dependent fashion. Interacts with CIART. Interacts with RWDD3. Interacts with UBE2I/UBC9 and this interaction is enhanced in the presence of RWDD3. Interacts with GRIP1. Interacts with NR4A3 (via nuclear receptor DNA-binding domain), represses transcription activity of NR4A3 on the POMC promoter Nur response element (NurRE). Directly interacts with PNRC2 to attract and form a complex with UPF1 and DCP1A; the interaction leads to rapid mRNA degradation. Interacts with GSK3B. Interacts with FNIP1 and FNIP2. Interacts (via C-terminus) with HNRNPU (via C-terminus). Interacts with MCM3AP. Interacts (via domain NR LBD) with HSP90AA1 and HSP90AB1. In the absence of hormonal ligand, interacts with TACC1. Interacts (via NR LBD domain) with ZNF764 (via KRAB domain); the interaction regulates transcription factor activity of NR3C1 by directing its actions toward certain biologic pathways. Post-translationally, acetylation by CLOCK reduces its binding to glucocorticoid response elements and its transcriptional activity. Increased proteasome-mediated degradation in response to glucocorticoids. In terms of processing, phosphorylated in the absence of hormone; becomes hyperphosphorylated in the presence of glucocorticoid. The Ser-203, Ser-226 and Ser-404-phosphorylated forms are mainly cytoplasmic, and the Ser-211-phosphorylated form is nuclear. Phosphorylation at Ser-211 increases transcriptional activity. Phosphorylation at Ser-203, Ser-226 and Ser-404 decreases signaling capacity. Phosphorylation at Ser-404 may protect from glucocorticoid-induced apoptosis. Phosphorylation at Ser-203 and Ser-211 is not required in regulation of chromosome segregation. May be dephosphorylated by PPP5C, attenuates NR3C1 action. Post-translationally, ubiquitinated by UBR5, leading to its degradation: UBR5 specifically recognizes and binds ligand-bound NR3C1 when it is not associated with coactivators (NCOAs). In presence of NCOAs, the UBR5-degron is not accessible, preventing its ubiquitination and degradation. Sumoylation at Lys-277 and Lys-293 negatively regulates its transcriptional activity. Sumoylation at Lys-703 positively regulates its transcriptional activity in the presence of RWDD3. Sumoylation at Lys-277 and Lys-293 is dispensable whereas sumoylation at Lys-703 is critical for the stimulatory effect of RWDD3 on its transcriptional activity. Heat shock increases sumoylation in a RWDD3-dependent manner.

Its subcellular location is the cytoplasm. It localises to the nucleus. It is found in the mitochondrion. The protein resides in the cytoskeleton. The protein localises to the spindle. Its subcellular location is the microtubule organizing center. It localises to the centrosome. It is found in the chromosome. The protein resides in the nucleoplasm. In terms of biological role, receptor for glucocorticoids (GC). Has a dual mode of action: as a transcription factor that binds to glucocorticoid response elements (GRE), both for nuclear and mitochondrial DNA, and as a modulator of other transcription factors. Affects inflammatory responses, cellular proliferation and differentiation in target tissues. Involved in chromatin remodeling. Plays a role in rapid mRNA degradation by binding to the 5' UTR of target mRNAs and interacting with PNRC2 in a ligand-dependent manner which recruits the RNA helicase UPF1 and the mRNA-decapping enzyme DCP1A, leading to RNA decay. Could act as a coactivator for STAT5-dependent transcription upon growth hormone (GH) stimulation and could reveal an essential role of hepatic GR in the control of body growth. Mediates glucocorticoid-induced apoptosis. Promotes accurate chromosome segregation during mitosis. May act as a tumor suppressor. May play a negative role in adipogenesis through the regulation of lipolytic and antilipogenic gene expression. The protein is Glucocorticoid receptor (NR3C1) of Saguinus oedipus (Cotton-top tamarin).